The primary structure comprises 320 residues: Phosphatidylserine decarboxylase proenzyme (320 aa).

Catalysis depends on charge relay system; for autoendoproteolytic cleavage activity residues D90, H147, and S254. The active-site Schiff-base intermediate with substrate; via pyruvic acid; for decarboxylase activity is the S254. Pyruvic acid (Ser); by autocatalysis is present on S254. The tract at residues 290-320 (TAAAEPAPLPEEEIRAEHRASPLVDDKQDQG) is disordered. Residues 301–320 (EEIRAEHRASPLVDDKQDQG) are compositionally biased toward basic and acidic residues.

Belongs to the phosphatidylserine decarboxylase family. PSD-B subfamily. Prokaryotic type I sub-subfamily. As to quaternary structure, heterodimer of a large membrane-associated beta subunit and a small pyruvoyl-containing alpha subunit. Pyruvate serves as cofactor. Post-translationally, is synthesized initially as an inactive proenzyme. Formation of the active enzyme involves a self-maturation process in which the active site pyruvoyl group is generated from an internal serine residue via an autocatalytic post-translational modification. Two non-identical subunits are generated from the proenzyme in this reaction, and the pyruvate is formed at the N-terminus of the alpha chain, which is derived from the carboxyl end of the proenzyme. The autoendoproteolytic cleavage occurs by a canonical serine protease mechanism, in which the side chain hydroxyl group of the serine supplies its oxygen atom to form the C-terminus of the beta chain, while the remainder of the serine residue undergoes an oxidative deamination to produce ammonia and the pyruvoyl prosthetic group on the alpha chain. During this reaction, the Ser that is part of the protease active site of the proenzyme becomes the pyruvoyl prosthetic group, which constitutes an essential element of the active site of the mature decarboxylase.

The protein localises to the cell membrane. It catalyses the reaction a 1,2-diacyl-sn-glycero-3-phospho-L-serine + H(+) = a 1,2-diacyl-sn-glycero-3-phosphoethanolamine + CO2. It participates in phospholipid metabolism; phosphatidylethanolamine biosynthesis; phosphatidylethanolamine from CDP-diacylglycerol: step 2/2. Catalyzes the formation of phosphatidylethanolamine (PtdEtn) from phosphatidylserine (PtdSer). The protein is Phosphatidylserine decarboxylase proenzyme of Klebsiella pneumoniae subsp. pneumoniae (strain ATCC 700721 / MGH 78578).